The chain runs to 885 residues: Alpha-actinin (885 aa).

The segment at M1–H242 is actin-binding. Calponin-homology (CH) domains are found at residues K26–A130 and M139–H245. Spectrin repeat units follow at residues L270–L377, H389–E494, E508–Q614, and L626–E727. EF-hand domains lie at E741–N776 and D780–D815. Residues D754, T758, R760, E765, D793, N795, T797, and Y799 each contribute to the Ca(2+) site.

It belongs to the alpha-actinin family. In terms of assembly, homodimer; antiparallel.

Its function is as follows. F-actin cross-linking protein which is thought to anchor actin to a variety of intracellular structures. This is a bundling protein. The protein is Alpha-actinin of Dermatophagoides farinae (American house dust mite).